The chain runs to 571 residues: Mannan endo-1,4-beta-mannosidase B (571 aa).

A signal peptide spans 1–19 (MNSLSLLLFCIFFVFSTFA). The CBM6 domain occupies 22-141 (VYYEAENGKL…WMWVDAFVIN (120 aa)). The GH26 domain maps to 165–459 (PAAKKLYDFL…FTHKTVMNMD (295 aa)). Tryptophan 286 contributes to the substrate binding site. The active-site Proton donor is the glutamate 319. Positions 324 and 379 each coordinate substrate. Glutamate 407 functions as the Nucleophile in the catalytic mechanism. 2 CBM10 domains span residues 491-527 (ECFS…CGIG) and 534-571 (VCWS…CGII).

Belongs to the glycosyl hydrolase 26 family.

The enzyme catalyses Random hydrolysis of (1-&gt;4)-beta-D-mannosidic linkages in mannans, galactomannans and glucomannans.. In Piromyces sp, this protein is Mannan endo-1,4-beta-mannosidase B (MANB).